A 213-amino-acid chain; its full sequence is Kynurenine formamidase (213 aa).

Trp18 lines the substrate pocket. The Zn(2+) site is built by His48, His52, and Asp54. The Proton donor/acceptor role is filled by His58. Positions 160 and 172 each coordinate Zn(2+).

It belongs to the Cyclase 1 superfamily. KynB family. As to quaternary structure, homodimer. The cofactor is Zn(2+).

The catalysed reaction is N-formyl-L-kynurenine + H2O = L-kynurenine + formate + H(+). It functions in the pathway amino-acid degradation; L-tryptophan degradation via kynurenine pathway; L-kynurenine from L-tryptophan: step 2/2. Its function is as follows. Catalyzes the hydrolysis of N-formyl-L-kynurenine to L-kynurenine, the second step in the kynurenine pathway of tryptophan degradation. This Burkholderia ambifaria (strain MC40-6) protein is Kynurenine formamidase.